The sequence spans 132 residues: Small ribosomal subunit protein uS8 (132 aa).

It belongs to the universal ribosomal protein uS8 family. In terms of assembly, part of the 30S ribosomal subunit. Contacts proteins S5 and S12.

In terms of biological role, one of the primary rRNA binding proteins, it binds directly to 16S rRNA central domain where it helps coordinate assembly of the platform of the 30S subunit. The chain is Small ribosomal subunit protein uS8 from Micrococcus luteus (strain ATCC 4698 / DSM 20030 / JCM 1464 / CCM 169 / CCUG 5858 / IAM 1056 / NBRC 3333 / NCIMB 9278 / NCTC 2665 / VKM Ac-2230) (Micrococcus lysodeikticus).